The primary structure comprises 144 residues: Deoxyuridine 5'-triphosphate nucleotidohydrolase (144 aa).

Substrate is bound by residues 63 to 65 (RSG), Asn-76, and 80 to 82 (TID).

This sequence belongs to the dUTPase family. Requires Mg(2+) as cofactor.

The catalysed reaction is dUTP + H2O = dUMP + diphosphate + H(+). It participates in pyrimidine metabolism; dUMP biosynthesis; dUMP from dCTP (dUTP route): step 2/2. Its function is as follows. This enzyme is involved in nucleotide metabolism: it produces dUMP, the immediate precursor of thymidine nucleotides and it decreases the intracellular concentration of dUTP so that uracil cannot be incorporated into DNA. The chain is Deoxyuridine 5'-triphosphate nucleotidohydrolase from Alkaliphilus metalliredigens (strain QYMF).